The following is a 447-amino-acid chain: MREILHIQGGQCGNQIGAKFWEVICDEHGIDHTGKYSGDSDLQLERINVYYNEASGGRFVPRAVLMDLEPGTMDSVRSGPFGQIFRPDNFVFGQSGAGNNWAKGHYTEGAELIDSVLDVVRKEAENCDCLQGFQVCHSLGGGTGSGMGTLLISKIREEYPDRMMLTFSVFPSPKVSDTVVEPYNATLSVHQLVENADECMVLDNEALYDICFRTLKLATPTFGDLNHLISATMSGVTCCLRFPGQLNSDLRKLAVNLIPFPRLHFFMVGFAPLTSRGSQQYRALTVPELTQQMWDAKNMMCAADPRHGRYLTASAMFRGKMSTKEVDEQMLNVQNKNSSYFVEWIPNNVKSSVCDIPPNGLKMASTFIGNSTSIQEMFRRVSEQFTAMFRRKAFLHWYTGEGMDEMEFTEAESNMNDLVAEYQQYQDATADDEEEDYGDEEEDEVAA.

GTP contacts are provided by Gln-11, Glu-69, Ser-138, Gly-142, Thr-143, Gly-144, Asn-204, and Asn-226. A Mg(2+)-binding site is contributed by Glu-69. The tract at residues 421–447 is disordered; sequence EYQQYQDATADDEEEDYGDEEEDEVAA. Over residues 429–447 the composition is skewed to acidic residues; that stretch reads TADDEEEDYGDEEEDEVAA.

The protein belongs to the tubulin family. In terms of assembly, dimer of alpha and beta chains. A typical microtubule is a hollow water-filled tube with an outer diameter of 25 nm and an inner diameter of 15 nM. Alpha-beta heterodimers associate head-to-tail to form protofilaments running lengthwise along the microtubule wall with the beta-tubulin subunit facing the microtubule plus end conferring a structural polarity. Microtubules usually have 13 protofilaments but different protofilament numbers can be found in some organisms and specialized cells. Mg(2+) serves as cofactor. In terms of tissue distribution, expressed in roots, leaf sheaths, and suspension cultured cells.

Its subcellular location is the cytoplasm. The protein localises to the cytoskeleton. Functionally, tubulin is the major constituent of microtubules, a cylinder consisting of laterally associated linear protofilaments composed of alpha- and beta-tubulin heterodimers. Microtubules grow by the addition of GTP-tubulin dimers to the microtubule end, where a stabilizing cap forms. Below the cap, tubulin dimers are in GDP-bound state, owing to GTPase activity of alpha-tubulin. The polypeptide is Tubulin beta-5 chain (TUBB5) (Oryza sativa subsp. japonica (Rice)).